The primary structure comprises 227 residues: Cytochrome c oxidase subunit 2 (227 aa).

The Mitochondrial intermembrane portion of the chain corresponds to 1–26; that stretch reads MATWSNLNLQNSSSPLMEQLIFFHDH. The helical transmembrane segment at 27-48 threads the bilayer; the sequence is TLMILLMITVLVAYIMSMLFFN. The Mitochondrial matrix portion of the chain corresponds to 49 to 62; it reads LYTNRFLLEGQTIE. A helical transmembrane segment spans residues 63–82; it reads IIWTILPAITLIFIALPSLR. At 83–227 the chain is on the mitochondrial intermembrane side; it reads LLYLLDESMD…FINWIKNYSS (145 aa). 6 residues coordinate Cu cation: H160, C195, E197, C199, H203, and M206. Residue E197 coordinates Mg(2+).

Belongs to the cytochrome c oxidase subunit 2 family. In terms of assembly, component of the cytochrome c oxidase (complex IV, CIV), a multisubunit enzyme composed of a catalytic core of 3 subunits and several supernumerary subunits. The complex exists as a monomer or a dimer and forms supercomplexes (SCs) in the inner mitochondrial membrane with ubiquinol-cytochrome c oxidoreductase (cytochrome b-c1 complex, complex III, CIII). It depends on Cu cation as a cofactor.

The protein resides in the mitochondrion inner membrane. It carries out the reaction 4 Fe(II)-[cytochrome c] + O2 + 8 H(+)(in) = 4 Fe(III)-[cytochrome c] + 2 H2O + 4 H(+)(out). Its function is as follows. Component of the cytochrome c oxidase, the last enzyme in the mitochondrial electron transport chain which drives oxidative phosphorylation. The respiratory chain contains 3 multisubunit complexes succinate dehydrogenase (complex II, CII), ubiquinol-cytochrome c oxidoreductase (cytochrome b-c1 complex, complex III, CIII) and cytochrome c oxidase (complex IV, CIV), that cooperate to transfer electrons derived from NADH and succinate to molecular oxygen, creating an electrochemical gradient over the inner membrane that drives transmembrane transport and the ATP synthase. Cytochrome c oxidase is the component of the respiratory chain that catalyzes the reduction of oxygen to water. Electrons originating from reduced cytochrome c in the intermembrane space (IMS) are transferred via the dinuclear copper A center (CU(A)) of subunit 2 and heme A of subunit 1 to the active site in subunit 1, a binuclear center (BNC) formed by heme A3 and copper B (CU(B)). The BNC reduces molecular oxygen to 2 water molecules using 4 electrons from cytochrome c in the IMS and 4 protons from the mitochondrial matrix. This is Cytochrome c oxidase subunit 2 (COII) from Acheta domesticus (House cricket).